Reading from the N-terminus, the 104-residue chain is L-rhamnose mutarotase (104 aa).

Tyr18 provides a ligand contact to substrate. The active-site Proton donor is His22. Substrate-binding positions include Tyr41 and 76–77 (WW).

It belongs to the rhamnose mutarotase family. Homodimer.

The protein resides in the cytoplasm. It carries out the reaction alpha-L-rhamnose = beta-L-rhamnose. It participates in carbohydrate metabolism; L-rhamnose metabolism. Its function is as follows. Involved in the anomeric conversion of L-rhamnose. The protein is L-rhamnose mutarotase of Yersinia pseudotuberculosis serotype O:1b (strain IP 31758).